Reading from the N-terminus, the 553-residue chain is Glutamate--tRNA ligase (553 aa).

A 'HIGH' region motif is present at residues P41–G51. A 'KMSKS' region motif is present at residues K293–R297. K296 contributes to the ATP binding site.

It belongs to the class-I aminoacyl-tRNA synthetase family. Glutamate--tRNA ligase type 1 subfamily. In terms of assembly, monomer.

The protein localises to the cytoplasm. The enzyme catalyses tRNA(Glu) + L-glutamate + ATP = L-glutamyl-tRNA(Glu) + AMP + diphosphate. Catalyzes the attachment of glutamate to tRNA(Glu) in a two-step reaction: glutamate is first activated by ATP to form Glu-AMP and then transferred to the acceptor end of tRNA(Glu). The protein is Glutamate--tRNA ligase of Clostridium beijerinckii (strain ATCC 51743 / NCIMB 8052) (Clostridium acetobutylicum).